Reading from the N-terminus, the 744-residue chain is MATHERKTIDLEQGWEFMQKGITKLKNILEGKPEPQFSSEDYMMLYTTIYNMCTQKPPHDYSQQLYEKYRESFEEYITSMVLPSLREKHDEFMLRELVKRWSNHKVMVRWLSRFFHYLDRYFISRRSLPQLSEVGLSCFRDLVYQEIKGKVKSAVISLIDQEREGEQIDRALLKNVLDIFVEIGLTSMDYYENDFEDFLLKDTADYYSIKAQTWILEDSCPDYMLKAEECLKREKERVAHYLHSSSEQKLLEKVQHELLTQYASQLLEKEHSGCHALLRDDKVDDLSRMYRLFSRITRGLEPVSQIFKQHVTNEGTALVKQAEDAASNKKPEKKEIVGLQEQVFVRKIIELHDKYVAYVTDCFQGHTLFHKALKEAFEVFCNKGVSGSSSAELLATFCDNILKKGGSEKLSDEAIEDTLEKVVRLLAYISDKDLFAEFYRKKLARRLLFDKSANDEHERSILTKLKQQCGGQFTSKMEGMVTDLTVARDHQAKFEEFISTHSELNPGIALAVTVLTTGFWPSYKSFDINLPAEMVKCVEVFKEFYQTRTKHRKLTWIYSLGTCNINAKFEAKTIELIVTTYQAALLLLFNGVDRLSYSEIVTQLNLSDDDVVRLLHSLSCAKYKILSKEPNNRSISPNDVFEFNSKFTDKLRRLKIPLPPVDEKKKVVEDVDKDRRYAIDASIVRIMKSRKVLGHQQLVMECVEQLGRMFKPDFKAIKKRIEDLITRDYLERDKDNPNVYRYLA.

Residues 674–736 enclose the Cullin neddylation domain; it reads DRRYAIDASI…RDYLERDKDN (63 aa).

Belongs to the cullin family. As to quaternary structure, part of a SCF (SKP1-CUL1-F-box protein) E3 ubiquitin-protein ligase complex. Is able to form the SCF complex together with SKP1 and the rice black streaked dwarf virus RBSDV protein P7-2. Interacts with D3. In terms of processing, neddylated (rubylated). Deneddylation occurs upon interaction with the COP9 signalosome (CSN) complex. As to expression, expressed in dry seeds and coleoptiles.

Functionally, involved in ubiquitination and subsequent proteasomal degradation of target proteins. This is Cullin-1 from Oryza sativa subsp. japonica (Rice).